The following is a 187-amino-acid chain: MNLQHHFLIAMPALQDPIFRRSVVYICEHNEDGAMGIIINKPLENLQIEGILEKLKITPEPRDPAIRLDKAVMLGGPLAEDRGFILHTPPSRFSSSIRISDNTVITTSRDVLETLGTPEQPSEVLVALGYSSWDKGQLEQELMDNAWLTAPADLNILFKTPIADRWRDAAKLIGIDILTMPGVAGHA.

The protein belongs to the UPF0301 (AlgH) family.

The polypeptide is UPF0301 protein CKO_04323 (Citrobacter koseri (strain ATCC BAA-895 / CDC 4225-83 / SGSC4696)).